A 544-amino-acid chain; its full sequence is Chaperonin GroEL (544 aa).

ATP is bound by residues 29–32 (TLGP), 86–90 (DGTTT), G413, 476–478 (NAA), and D492.

It belongs to the chaperonin (HSP60) family. Forms a cylinder of 14 subunits composed of two heptameric rings stacked back-to-back. Interacts with the co-chaperonin GroES.

The protein localises to the cytoplasm. The enzyme catalyses ATP + H2O + a folded polypeptide = ADP + phosphate + an unfolded polypeptide.. Functionally, together with its co-chaperonin GroES, plays an essential role in assisting protein folding. The GroEL-GroES system forms a nano-cage that allows encapsulation of the non-native substrate proteins and provides a physical environment optimized to promote and accelerate protein folding. The chain is Chaperonin GroEL from Bacillus velezensis (strain DSM 23117 / BGSC 10A6 / LMG 26770 / FZB42) (Bacillus amyloliquefaciens subsp. plantarum).